The sequence spans 371 residues: Enoyl-[acyl-carrier-protein] reductase [NADH] 2, chloroplastic (371 aa).

The N-terminal 67 residues, 1–67 (MGASVTTGLQ…SLNHKRFAVR (67 aa)), are a transit peptide targeting the chloroplast. Residues glycine 87, tyrosine 94, 151–152 (DA), 198–199 (SL), and leucine 248 contribute to the NAD(+) site. Catalysis depends on proton acceptor residues tyrosine 250 and tyrosine 260. NAD(+) is bound by residues lysine 268 and 298 to 302 (LGSRA).

The protein belongs to the short-chain dehydrogenases/reductases (SDR) family. FabI subfamily. In terms of assembly, homotetramer.

It is found in the plastid. It localises to the chloroplast. It carries out the reaction a 2,3-saturated acyl-[ACP] + NAD(+) = a (2E)-enoyl-[ACP] + NADH + H(+). It participates in lipid metabolism; fatty acid biosynthesis. Functionally, catalyzes the NAD-dependent reduction of a carbon-carbon double bond in an enoyl moiety that is covalently linked to an acyl carrier protein (ACP). Catalyzes the last reduction step in the de novo synthesis cycle of fatty acids. Involved in the elongation cycle of fatty acids which are used in lipid metabolism. Required for normal plant growth. This Oryza sativa subsp. japonica (Rice) protein is Enoyl-[acyl-carrier-protein] reductase [NADH] 2, chloroplastic.